We begin with the raw amino-acid sequence, 630 residues long: MALSSVEPTEAPRATGFGALTLGSIGVVFGDIGTSPLYAFREAVHVAAEGAPVTRVIVLGVLSLILWSLLIVVTAKYVLLLLRADNNGEGGTLSLMALGQRALGRRSVPLLVLGVIGASMFIGDSMITPAISVLSAVEGLKIAAPALQHYVVPLTVGILVALFAFQRWGTAKVASAFGPVMVLWFSTLAVLGLLHINDDPSVIAAINPWYAVEFMLSHGVIALVTIGAVFLAVTGGEALYADLGHFGRKPIQAGWLFFVLPSLLLNYFGQGAMVLAHPDAVENTFYRMVPENLLVPMILLATAATVIASQAVITGAFSLISQAVQLGLLPRFEVRYTSETHAGQIYLPRVNMLLLAGVLLLVLLFHSSSALAAAYGIAVSTTMVVDGVMGFVVVWKLWGWRPAAAAALIIPFVAVDAIFFSANLLKLMEGAWVPLLFGFLMAMLVWTWRRGSAMLILKTRRTEVPLPDLIRSLEKRPPHIVRGTAVFLTSDPEYVPSALLHNLKHNKVLHEHNVILTIETAQTPRVDLADRVRMESLGDKFARVRLRFGFMESPNVPKALVIARKLGWQFDIMSTSFFVSRRSLKPAAQSGMPRWQNGLFIALSRSANDATDYFQIPTGRVVEVGTQVTI.

The next 12 membrane-spanning stretches (helical) occupy residues 14 to 34 (ATGF…DIGT), 56 to 76 (VIVL…VTAK), 108 to 128 (VPLL…SMIT), 145 to 165 (PALQ…LFAF), 176 to 196 (AFGP…LLHI), 214 to 234 (FMLS…LAVT), 255 to 275 (WLFF…AMVL), 293 to 313 (LLVP…QAVI), 352 to 372 (MLLL…SALA), 375 to 395 (YGIA…VVVW), 402 to 422 (PAAA…FFSA), and 427 to 447 (LMEG…LVWT).

This sequence belongs to the HAK/KUP transporter (TC 2.A.72) family.

Its subcellular location is the cell inner membrane. The catalysed reaction is K(+)(in) + H(+)(in) = K(+)(out) + H(+)(out). Transport of potassium into the cell. Likely operates as a K(+):H(+) symporter. The polypeptide is Probable potassium transport system protein Kup 2 (Rhodopseudomonas palustris (strain BisA53)).